Consider the following 337-residue polypeptide: Ferredoxin--NADP reductase (337 aa).

FAD-binding residues include D33, Q41, Y46, A86, F120, D286, and T327.

Belongs to the ferredoxin--NADP reductase type 2 family. Homodimer. It depends on FAD as a cofactor.

The catalysed reaction is 2 reduced [2Fe-2S]-[ferredoxin] + NADP(+) + H(+) = 2 oxidized [2Fe-2S]-[ferredoxin] + NADPH. The sequence is that of Ferredoxin--NADP reductase from Rickettsia canadensis (strain McKiel).